The primary structure comprises 78 residues: Small, acid-soluble spore protein Tlp (78 aa).

Residues 32-78 form a disordered region; it reads SEEQLSFASEAEQEQIREKNERRNESIEAMRNEIHDEAEARKNGYHQ. The span at 45–78 shows a compositional bias: basic and acidic residues; the sequence is EQIREKNERRNESIEAMRNEIHDEAEARKNGYHQ.

It belongs to the Tlp family.

The protein resides in the spore core. The protein is Small, acid-soluble spore protein Tlp of Bacillus licheniformis (strain ATCC 14580 / DSM 13 / JCM 2505 / CCUG 7422 / NBRC 12200 / NCIMB 9375 / NCTC 10341 / NRRL NRS-1264 / Gibson 46).